A 481-amino-acid polypeptide reads, in one-letter code: Extracellular exo-alpha-(1-&gt;5)-L-arabinofuranosidase (481 aa).

An N-terminal signal peptide occupies residues 1 to 27 (MRRLTVRLFTAVLAALALLTMGTPAHA). A catalytic region spans residues 37–336 (FTNPLAEKRA…KVYWNADGTP (300 aa)). Aspartate 47 functions as the Proton acceptor in the catalytic mechanism. Asparagine 186 lines the substrate pocket. The active-site Proton donor is glutamate 223. Residues histidine 287, arginine 321, 363-366 (HWDF), aspartate 379, 457-460 (HYEN), and aspartate 475 contribute to the substrate site. An ABD region spans residues 349 to 479 (VRFSSYNYPD…ALDRQDATFY (131 aa)).

Belongs to the glycosyl hydrolase 43 family.

The protein localises to the secreted. It carries out the reaction Hydrolysis of terminal non-reducing alpha-L-arabinofuranoside residues in alpha-L-arabinosides.. It participates in glycan metabolism; L-arabinan degradation. Involved in the degradation of arabinan and is a key enzyme in the complete degradation of the plant cell wall. Catalyzes only the cleavage of terminal alpha-(1-&gt;5) arabinofuranosyl bonds of arabinan present in the arabinofuranosyl polysaccharides or oligosaccharides. It cannot act on other arabinose-containing polysaccharides and arabinoxylo-oligosaccharides. The sequence is that of Extracellular exo-alpha-(1-&gt;5)-L-arabinofuranosidase from Streptomyces avermitilis (strain ATCC 31267 / DSM 46492 / JCM 5070 / NBRC 14893 / NCIMB 12804 / NRRL 8165 / MA-4680).